Here is a 484-residue protein sequence, read N- to C-terminus: Protein nucleotidyltransferase YdiU (484 aa).

ATP contacts are provided by glycine 92, glycine 94, arginine 95, lysine 115, aspartate 127, glycine 128, arginine 178, and arginine 185. The Proton acceptor role is filled by aspartate 258. Asparagine 259 and aspartate 268 together coordinate Mg(2+). Aspartate 268 contributes to the ATP binding site.

This sequence belongs to the SELO family. Mg(2+) serves as cofactor. Mn(2+) is required as a cofactor.

The catalysed reaction is L-seryl-[protein] + ATP = 3-O-(5'-adenylyl)-L-seryl-[protein] + diphosphate. The enzyme catalyses L-threonyl-[protein] + ATP = 3-O-(5'-adenylyl)-L-threonyl-[protein] + diphosphate. It catalyses the reaction L-tyrosyl-[protein] + ATP = O-(5'-adenylyl)-L-tyrosyl-[protein] + diphosphate. It carries out the reaction L-histidyl-[protein] + UTP = N(tele)-(5'-uridylyl)-L-histidyl-[protein] + diphosphate. The catalysed reaction is L-seryl-[protein] + UTP = O-(5'-uridylyl)-L-seryl-[protein] + diphosphate. The enzyme catalyses L-tyrosyl-[protein] + UTP = O-(5'-uridylyl)-L-tyrosyl-[protein] + diphosphate. Its function is as follows. Nucleotidyltransferase involved in the post-translational modification of proteins. It can catalyze the addition of adenosine monophosphate (AMP) or uridine monophosphate (UMP) to a protein, resulting in modifications known as AMPylation and UMPylation. The sequence is that of Protein nucleotidyltransferase YdiU from Mycolicibacterium smegmatis (strain ATCC 700084 / mc(2)155) (Mycobacterium smegmatis).